The sequence spans 472 residues: NADH-quinone oxidoreductase subunit N 2 (472 aa).

13 consecutive transmembrane segments (helical) span residues W3 to S23, H34 to A54, L67 to C87, F106 to I126, F156 to A176, V198 to F218, V233 to I253, L263 to I283, L291 to N311, A317 to V337, I360 to G380, T398 to I418, and L441 to I461.

It belongs to the complex I subunit 2 family. NDH-1 is composed of 14 different subunits. Subunits NuoA, H, J, K, L, M, N constitute the membrane sector of the complex.

It is found in the cell inner membrane. The enzyme catalyses a quinone + NADH + 5 H(+)(in) = a quinol + NAD(+) + 4 H(+)(out). NDH-1 shuttles electrons from NADH, via FMN and iron-sulfur (Fe-S) centers, to quinones in the respiratory chain. The immediate electron acceptor for the enzyme in this species is believed to be ubiquinone. Couples the redox reaction to proton translocation (for every two electrons transferred, four hydrogen ions are translocated across the cytoplasmic membrane), and thus conserves the redox energy in a proton gradient. The polypeptide is NADH-quinone oxidoreductase subunit N 2 (Syntrophobacter fumaroxidans (strain DSM 10017 / MPOB)).